Reading from the N-terminus, the 401-residue chain is Probable aspartic-type endopeptidase TRV_05382 (401 aa).

A signal peptide spans 1–22 (MWHSPFFTAFTLFLGFFTLTLA). Asn-80 and Asn-102 each carry an N-linked (GlcNAc...) asparagine glycan. A Peptidase A1 domain is found at 94–398 (FVNEITIGNN…DHDGPKMGFA (305 aa)). The active site involves Asp-110. N-linked (GlcNAc...) asparagine glycosylation is present at Asn-282. Asp-292 is an active-site residue. Residue Asn-329 is glycosylated (N-linked (GlcNAc...) asparagine).

Belongs to the peptidase A1 family.

It is found in the secreted. In terms of biological role, probable aspartic-type endopeptidase which contributes to virulence. The protein is Probable aspartic-type endopeptidase TRV_05382 of Trichophyton verrucosum (strain HKI 0517).